A 137-amino-acid polypeptide reads, in one-letter code: Nucleoside diphosphate kinase (137 aa).

The ATP site is built by Lys9, Phe57, Arg85, Thr91, Arg102, and Asn112. Catalysis depends on His115, which acts as the Pros-phosphohistidine intermediate.

Belongs to the NDK family. In terms of assembly, homotetramer. Mg(2+) serves as cofactor.

Its subcellular location is the cytoplasm. It catalyses the reaction a 2'-deoxyribonucleoside 5'-diphosphate + ATP = a 2'-deoxyribonucleoside 5'-triphosphate + ADP. The catalysed reaction is a ribonucleoside 5'-diphosphate + ATP = a ribonucleoside 5'-triphosphate + ADP. In terms of biological role, major role in the synthesis of nucleoside triphosphates other than ATP. The ATP gamma phosphate is transferred to the NDP beta phosphate via a ping-pong mechanism, using a phosphorylated active-site intermediate. The sequence is that of Nucleoside diphosphate kinase from Campylobacter lari (strain RM2100 / D67 / ATCC BAA-1060).